The primary structure comprises 145 residues: Putative pre-16S rRNA nuclease (145 aa).

The protein belongs to the YqgF nuclease family.

The protein resides in the cytoplasm. In terms of biological role, could be a nuclease involved in processing of the 5'-end of pre-16S rRNA. The protein is Putative pre-16S rRNA nuclease of Opitutus terrae (strain DSM 11246 / JCM 15787 / PB90-1).